The following is a 517-amino-acid chain: Nucleoside transporter FUN26 (517 aa).

Positions M1–P63 are disordered. The span at T25–H44 shows a compositional bias: basic and acidic residues. S45 and S58 each carry phosphoserine. The next 11 helical transmembrane spans lie at L76 to L96, I116 to L136, L151 to L171, W174 to T194, M214 to I234, G243 to F263, L344 to A364, V367 to L387, T411 to I431, I446 to I466, and I492 to I512.

It belongs to the SLC29A/ENT transporter (TC 2.A.57) family.

It is found in the membrane. Has broad nucleoside selectivity (uridine, adenosine and cytidine) and most likely functions to transport nucleosides across intracellular membranes. In Saccharomyces cerevisiae (strain ATCC 204508 / S288c) (Baker's yeast), this protein is Nucleoside transporter FUN26 (FUN26).